The chain runs to 325 residues: Psp operon transcriptional activator (325 aa).

Positions 15-237 (FLEVLEQVSH…ELKNVVERSV (223 aa)) constitute a Sigma-54 factor interaction domain. ATP is bound by residues 36–43 (GERGTGKE) and 99–108 (ADGGTLFLDE). The segment at residues 302–321 (QKRAAELLGLTYHQFRALLK) is a DNA-binding region (H-T-H motif).

In terms of assembly, forms a complex with PspA, which is composed of around 6 PspF subunits and 6 PspA subunits.

Its subcellular location is the cytoplasm. With respect to regulation, ATPase activity is inhibited by interaction with PspA. Under inducing conditions, the interaction is disrupted, allowing activation of psp transcription. Its function is as follows. Transcriptional activator for the phage shock protein (psp) operon (pspABCDE) and pspG gene. The sequence is that of Psp operon transcriptional activator (pspF) from Escherichia coli (strain K12).